The chain runs to 285 residues: Alginate lyase (285 aa).

The first 20 residues, 1-20 (MIKSNLVISSLAIVSSMSYA), serve as a signal peptide directing secretion.

This sequence belongs to the polysaccharide lyase 6 family.

It carries out the reaction Eliminative cleavage of alginate to give oligosaccharides with 4-deoxy-alpha-L-erythro-hex-4-enuronosyl groups at their non-reducing ends and beta-D-mannuronate at their reducing end.. This is Alginate lyase (alxM) from Photobacterium sp. (strain ATCC 43367).